Reading from the N-terminus, the 183-residue chain is MSLIDQAKEQMAKTVENTKENFSGIRTGRANPALLNGITVDYYGAPTPIKAVASIGVPEPRTLSVTPFDASQAGAVEKALRNSDLGISPNRDGNVIRLTMPELTEDRRKEYVKLAKGKAEDGKVAVRNIRRKTKETIDKAVKDGEMGEDEGDRLLKDLDKVTKSVTDEIDTLLETKQKEIMEV.

The protein belongs to the RRF family.

It is found in the cytoplasm. In terms of biological role, responsible for the release of ribosomes from messenger RNA at the termination of protein biosynthesis. May increase the efficiency of translation by recycling ribosomes from one round of translation to another. The polypeptide is Ribosome-recycling factor (Bifidobacterium longum (strain DJO10A)).